We begin with the raw amino-acid sequence, 213 residues long: 3-isopropylmalate dehydratase small subunit (213 aa).

This sequence belongs to the LeuD family. LeuD type 1 subfamily. Heterodimer of LeuC and LeuD.

It carries out the reaction (2R,3S)-3-isopropylmalate = (2S)-2-isopropylmalate. Its pathway is amino-acid biosynthesis; L-leucine biosynthesis; L-leucine from 3-methyl-2-oxobutanoate: step 2/4. In terms of biological role, catalyzes the isomerization between 2-isopropylmalate and 3-isopropylmalate, via the formation of 2-isopropylmaleate. This is 3-isopropylmalate dehydratase small subunit from Magnetococcus marinus (strain ATCC BAA-1437 / JCM 17883 / MC-1).